Here is a 246-residue protein sequence, read N- to C-terminus: Orotidine 5'-phosphate decarboxylase (246 aa).

Substrate is bound by residues D22, K44, 71 to 80 (DLKYHDIPHT), T130, R191, Q201, G221, and R222. K73 (proton donor) is an active-site residue.

This sequence belongs to the OMP decarboxylase family. Type 1 subfamily. Homodimer.

The catalysed reaction is orotidine 5'-phosphate + H(+) = UMP + CO2. It participates in pyrimidine metabolism; UMP biosynthesis via de novo pathway; UMP from orotate: step 2/2. Its function is as follows. Catalyzes the decarboxylation of orotidine 5'-monophosphate (OMP) to uridine 5'-monophosphate (UMP). This Neisseria gonorrhoeae (strain ATCC 700825 / FA 1090) protein is Orotidine 5'-phosphate decarboxylase.